The sequence spans 310 residues: Putative S-adenosyl-L-methionine-dependent methyltransferase Mvan_1346 (310 aa).

S-adenosyl-L-methionine contacts are provided by residues Asp136 and 165–166; that span reads DL.

Belongs to the UPF0677 family.

In terms of biological role, exhibits S-adenosyl-L-methionine-dependent methyltransferase activity. The chain is Putative S-adenosyl-L-methionine-dependent methyltransferase Mvan_1346 from Mycolicibacterium vanbaalenii (strain DSM 7251 / JCM 13017 / BCRC 16820 / KCTC 9966 / NRRL B-24157 / PYR-1) (Mycobacterium vanbaalenii).